We begin with the raw amino-acid sequence, 225 residues long: Leucyl/phenylalanyl-tRNA--protein transferase (225 aa).

Belongs to the L/F-transferase family.

The protein resides in the cytoplasm. It catalyses the reaction N-terminal L-lysyl-[protein] + L-leucyl-tRNA(Leu) = N-terminal L-leucyl-L-lysyl-[protein] + tRNA(Leu) + H(+). The catalysed reaction is N-terminal L-arginyl-[protein] + L-leucyl-tRNA(Leu) = N-terminal L-leucyl-L-arginyl-[protein] + tRNA(Leu) + H(+). It carries out the reaction L-phenylalanyl-tRNA(Phe) + an N-terminal L-alpha-aminoacyl-[protein] = an N-terminal L-phenylalanyl-L-alpha-aminoacyl-[protein] + tRNA(Phe). Functionally, functions in the N-end rule pathway of protein degradation where it conjugates Leu, Phe and, less efficiently, Met from aminoacyl-tRNAs to the N-termini of proteins containing an N-terminal arginine or lysine. The protein is Leucyl/phenylalanyl-tRNA--protein transferase of Nitrobacter winogradskyi (strain ATCC 25391 / DSM 10237 / CIP 104748 / NCIMB 11846 / Nb-255).